The sequence spans 1608 residues: Protein REDUCED CHLOROPLAST COVERAGE 3 (1608 aa).

The span at 1 to 12 (MAPRSSKGKSNN) shows a compositional bias: basic residues. 2 disordered regions span residues 1-22 (MAPR…KKKR) and 278-303 (VSES…GRNG). The 277-residue stretch at 288 to 564 (EDEHWGGNGG…KKETDVCGKP (277 aa)) folds into the Clu domain. TPR repeat units lie at residues 848–881 (GRTL…MIAV), 890–923 (ACAY…NERE), 932–965 (MKSY…LHFT), and 974–1007 (AATY…NKRL). Disordered stretches follow at residues 1194–1226 (VEES…RQPD), 1238–1292 (HNRN…ASGA), 1369–1400 (KQES…KTSD), 1466–1499 (TPRS…VSVD), and 1531–1552 (PAAL…KDSA). The Nuclear localization signal motif lies at 1217–1224 (GRKSRQRQ). Composition is skewed to polar residues over residues 1242-1265 (QDVQ…LSKS) and 1373-1385 (QESA…LTSE). A compositionally biased stretch (polar residues) spans 1535 to 1546 (SKTSPEAESGGT).

The protein localises to the nucleus. It localises to the cytoplasm. It is found in the cytosol. Its function is as follows. May act as the scaffold of a protein complex, which sequesters key factors that are required for the G2 to M transition in meristematic tissues. Together with REC2, REC3 and FMT/CLU, contributes to the establishment of the cellular volume devoted to the chloroplast compartment. This is Protein REDUCED CHLOROPLAST COVERAGE 3 from Arabidopsis thaliana (Mouse-ear cress).